Here is a 212-residue protein sequence, read N- to C-terminus: Orotate phosphoribosyltransferase (212 aa).

Lys26 contributes to the 5-phospho-alpha-D-ribose 1-diphosphate binding site. Orotate is bound at residue 34–35 (FF). Residues 72-73 (YK), Arg98, Lys99, Lys102, His104, and 123-131 (DDVISAGTS) each bind 5-phospho-alpha-D-ribose 1-diphosphate. 2 residues coordinate orotate: Ser127 and Arg155.

Belongs to the purine/pyrimidine phosphoribosyltransferase family. PyrE subfamily. Homodimer. The cofactor is Mg(2+).

The catalysed reaction is orotidine 5'-phosphate + diphosphate = orotate + 5-phospho-alpha-D-ribose 1-diphosphate. It functions in the pathway pyrimidine metabolism; UMP biosynthesis via de novo pathway; UMP from orotate: step 1/2. Its function is as follows. Catalyzes the transfer of a ribosyl phosphate group from 5-phosphoribose 1-diphosphate to orotate, leading to the formation of orotidine monophosphate (OMP). The protein is Orotate phosphoribosyltransferase of Thiobacillus denitrificans (strain ATCC 25259 / T1).